The sequence spans 298 residues: Apolipoprotein E (298 aa).

The first 18 residues, 1 to 18 (MKILWAALVLTLLAGCRA), serve as a signal peptide directing secretion. 6 consecutive repeat copies span residues 74–95 (LLME…KEVG), 96–117 (PMAE…ARLA), 118–139 (GDME…AMLG), 140–161 (QSSE…KRLQ), 162–183 (RDAE…EGAE), and 223–244 (GRLE…EQME). Residues 74–244 (LLMEDTMKEL…RLEEVREQME (171 aa)) form an 8 X 22 AA approximate tandem repeats region. M137 carries the methionine sulfoxide modification. Phosphoserine is present on S141. Residues 152-162 (HLRKLRKRLQR) are LDL and other lipoprotein receptors binding. 156-159 (LRKR) is a binding site for heparin. The tract at residues 204-272 (ALTSHPLRER…SWFEPMVEDL (69 aa)) is lipid-binding and lipoprotein association. Residue 218–225 (GEQVRGRL) coordinates heparin. Residues 260 to 272 (RLKSWFEPMVEDL) are specificity for association with VLDL.

It belongs to the apolipoprotein A1/A4/E family. In terms of assembly, homotetramer. May interact with ABCA1; functionally associated with ABCA1 in the biogenesis of HDLs. May interact with APP/A4 amyloid-beta peptide; the interaction is extremely stable in vitro but its physiological significance is unclear. May interact with MAPT. May interact with MAP2. In the cerebrospinal fluid, interacts with secreted SORL1. Interacts with PMEL; this allows the loading of PMEL luminal fragment on ILVs to induce fibril nucleation. APOE exists as multiple glycosylated and sialylated glycoforms within cells and in plasma. The extent of glycosylation and sialylation are tissue and context specific. In terms of processing, glycated in plasma VLDL. Post-translationally, phosphorylated by FAM20C in the extracellular medium.

It is found in the secreted. The protein resides in the extracellular space. Its subcellular location is the extracellular matrix. The protein localises to the extracellular vesicle. It localises to the endosome. It is found in the multivesicular body. In terms of biological role, APOE is an apolipoprotein, a protein associating with lipid particles, that mainly functions in lipoprotein-mediated lipid transport between organs via the plasma and interstitial fluids. APOE is a core component of plasma lipoproteins and is involved in their production, conversion and clearance. Apolipoproteins are amphipathic molecules that interact both with lipids of the lipoprotein particle core and the aqueous environment of the plasma. As such, APOE associates with chylomicrons, chylomicron remnants, very low density lipoproteins (VLDL) and intermediate density lipoproteins (IDL) but shows a preferential binding to high-density lipoproteins (HDL). It also binds a wide range of cellular receptors including the LDL receptor/LDLR, the LDL receptor-related proteins LRP1, LRP2 and LRP8 and the very low-density lipoprotein receptor/VLDLR that mediate the cellular uptake of the APOE-containing lipoprotein particles. Finally, APOE also has a heparin-binding activity and binds heparan-sulfate proteoglycans on the surface of cells, a property that supports the capture and the receptor-mediated uptake of APOE-containing lipoproteins by cells. A main function of APOE is to mediate lipoprotein clearance through the uptake of chylomicrons, VLDLs, and HDLs by hepatocytes. APOE is also involved in the biosynthesis by the liver of VLDLs as well as their uptake by peripheral tissues ensuring the delivery of triglycerides and energy storage in muscle, heart and adipose tissues. By participating in the lipoprotein-mediated distribution of lipids among tissues, APOE plays a critical role in plasma and tissues lipid homeostasis. APOE is also involved in two steps of reverse cholesterol transport, the HDLs-mediated transport of cholesterol from peripheral tissues to the liver, and thereby plays an important role in cholesterol homeostasis. First, it is functionally associated with ABCA1 in the biogenesis of HDLs in tissues. Second, it is enriched in circulating HDLs and mediates their uptake by hepatocytes. APOE also plays an important role in lipid transport in the central nervous system, regulating neuron survival and sprouting. This is Apolipoprotein E (APOE) from Hydrochoerus hydrochaeris (Capybara).